Here is a 321-residue protein sequence, read N- to C-terminus: Quinol oxidase subunit 2 (321 aa).

Residues 1-25 form the signal peptide; sequence MIFLFRALKPLLVLALLTVVFVLGG. Residue Cys26 is the site of N-palmitoyl cysteine attachment. Cys26 carries S-diacylglycerol cysteine lipidation. 2 helical membrane-spanning segments follow: residues 49–69 and 90–110; these read SIGF…IILV and TFLE…LSVP. The disordered stretch occupies residues 294-321; that stretch reads QAVSPHSKTDPFENVKENEFKKSDDTEE. A compositionally biased stretch (basic and acidic residues) spans 300 to 321; the sequence is SKTDPFENVKENEFKKSDDTEE.

This sequence belongs to the cytochrome c oxidase subunit 2 family.

Its subcellular location is the cell membrane. The catalysed reaction is 2 a quinol + O2 = 2 a quinone + 2 H2O. Functionally, catalyzes quinol oxidation with the concomitant reduction of oxygen to water. Major component for energy conversion during vegetative growth. Subunit II transfers the electrons from a quinol to the binuclear center of the catalytic subunit I. This is Quinol oxidase subunit 2 (qoxA) from Bacillus spizizenii (strain ATCC 23059 / NRRL B-14472 / W23) (Bacillus subtilis subsp. spizizenii).